The chain runs to 250 residues: L-cystine transport system ATP-binding protein TcyN (250 aa).

Residues 4–244 form the ABC transporter domain; the sequence is IEVKNLVKKF…PEQPRTRQFL (241 aa). 36-43 is a binding site for ATP; sequence GPSGSGKT.

It belongs to the ABC transporter superfamily. In terms of assembly, the complex is composed of two ATP-binding proteins (TcyN), two transmembrane proteins (TcyL) and a solute-binding protein (TcyJ).

Its subcellular location is the cell inner membrane. The catalysed reaction is L-cystine(out) + ATP + H2O = L-cystine(in) + ADP + phosphate + H(+). It carries out the reaction D-cystine(out) + ATP + H2O = D-cystine(in) + ADP + phosphate + H(+). With respect to regulation, the TcyJLN system is inhibited by L-cystine, L-cysteine, DL-2,6-diaminopimelic acid and L-cystathionine, and is stimulated by D-cysteine. Its function is as follows. Part of the ABC transporter complex TcyJLN involved in L-cystine import. This high affinity cystine transporter is involved in resistance to oxidative stress by forming a L-cysteine/L-cystine shuttle system with the EamA transporter, which exports L-cysteine as reducing equivalents to the periplasm to prevent the cells from oxidative stress. Exported L-cysteine can reduce the periplasmic hydrogen peroxide to water, and then generated L-cystine is imported back into the cytoplasm via the TcyJLN complex. Functions at low cystine concentrations. The system can also transport L-cysteine, diaminopimelic acid (DAP), djenkolate, lanthionine, D-cystine, homocystine, and it mediates accumulation of the toxic compounds L-selenaproline (SCA) and L-selenocystine (SeCys). Could also facilitate threonine efflux. Responsible for energy coupling to the transport system. In Escherichia coli (strain K12), this protein is L-cystine transport system ATP-binding protein TcyN.